Here is a 384-residue protein sequence, read N- to C-terminus: MANVDEAILKRVKGWAPYVDAKLGFRNHWYPVMFSKEIDEGEPKTLKLLGENLLVNRIDGKLYCLKDRCLHRGVQLSVKVECKTKSTITCWYHAWTYRWEDGVLCDILTNPTSAQIGRQKLKTYPVQEAKGCVFIYLGDGDPPPLARDTPPNFLDDDMEILGKNQIIKSNWRLAVENGFDPSHIYIHKDSILVKDNDLALPLGFAPGGDRKQQTRVVDDDVVGRKGVYDLIGEHGVPVFEGTIGGEVVREGAYGEKIVANDISIWLPGVLKVNPFPNPDMMQFEWYVPIDENTHYYFQTLGKPCANDEERKNYEQEFESKWKPMALEGFNNDDIWAREAMVDFYADDKGWVNEILFEVDEAIVAWRKLASEHNQGIQTQAHVSG.

The 107-residue stretch at 29 to 135 (WYPVMFSKEI…VQEAKGCVFI (107 aa)) folds into the Rieske domain. [2Fe-2S] cluster is bound by residues cysteine 69, histidine 71, cysteine 90, and histidine 93.

As to quaternary structure, homotrimer. Carbazole 1,9a-dioxygenase complex consists of a terminal oxygenase component CarAa, a ferredoxin reductase component CarAd and a ferredoxin component CarAc. [2Fe-2S] cluster is required as a cofactor.

The enzyme catalyses 9H-carbazole + NADH + O2 + H(+) = 2'-aminobiphenyl-2,3-diol + NAD(+). It catalyses the reaction 9H-carbazole + NADPH + O2 + H(+) = 2'-aminobiphenyl-2,3-diol + NADP(+). Functionally, part of the multicomponent carbazole 1,9a-dioxygenase (CARDO), that converts carbazole (CAR) into 2-aminobiphenyl-2,3-diol. Catalyzes the dioxygenation at the angular (C-9a) and adjacent (C-1) positions of carbazole to yield a highly unstable cis-hydrodiol intermediate which is spontaneously converted to 2-aminobiphenyl-2,3-diol. It is also able to attack the angular position adjacent of hetero atom of heterocyclic aromatic compounds such as polychlorinated dibenzo-p-dioxin (DD) and dibenzofuran (DBF). It was also shown that CARDO has the ability to metabolize biphenyl and polycyclic aromatic hydrocarbons, such as naphthalene and phenanthrene. This Metapseudomonas resinovorans (Pseudomonas resinovorans) protein is Carbazole 1,9a-dioxygenase, terminal oxygenase component CarAa (carAa).